We begin with the raw amino-acid sequence, 439 residues long: Glutamate-1-semialdehyde 2,1-aminomutase (439 aa).

At Lys-270 the chain carries N6-(pyridoxal phosphate)lysine.

It belongs to the class-III pyridoxal-phosphate-dependent aminotransferase family. HemL subfamily. Homodimer. Pyridoxal 5'-phosphate is required as a cofactor.

Its subcellular location is the cytoplasm. The catalysed reaction is (S)-4-amino-5-oxopentanoate = 5-aminolevulinate. It functions in the pathway porphyrin-containing compound metabolism; protoporphyrin-IX biosynthesis; 5-aminolevulinate from L-glutamyl-tRNA(Glu): step 2/2. The chain is Glutamate-1-semialdehyde 2,1-aminomutase from Kocuria rhizophila (strain ATCC 9341 / DSM 348 / NBRC 103217 / DC2201).